The following is a 1041-amino-acid chain: Beta-galactosidase (1041 aa).

The substrate site is built by Asn-103 and Asp-201. Asp-201 is a Na(+) binding site. 3 residues coordinate Mg(2+): Glu-415, His-417, and Glu-460. Substrate-binding positions include Glu-460 and 536–539 (EYAH). Catalysis depends on Glu-460, which acts as the Proton donor. Glu-536 acts as the Nucleophile in catalysis. Asn-596 lines the Mg(2+) pocket. 2 residues coordinate Na(+): Phe-600 and Asn-603. Substrate contacts are provided by Asn-603 and Trp-1016.

It belongs to the glycosyl hydrolase 2 family. As to quaternary structure, homotetramer. It depends on Mg(2+) as a cofactor. Na(+) serves as cofactor.

The catalysed reaction is Hydrolysis of terminal non-reducing beta-D-galactose residues in beta-D-galactosides.. The sequence is that of Beta-galactosidase from Alteromonas mediterranea (strain DSM 17117 / CIP 110805 / LMG 28347 / Deep ecotype).